The chain runs to 482 residues: tRNA sulfurtransferase (482 aa).

Residues 61-165 (DVTLAVLTQT…NDKLNLIIAR (105 aa)) enclose the THUMP domain. ATP is bound by residues 183-184 (LI), K265, G287, and Q296. C344 and C456 form a disulfide bridge. In terms of domain architecture, Rhodanese spans 404–482 (LGSDVVVLDI…GYKNVKVYRP (79 aa)). C456 serves as the catalytic Cysteine persulfide intermediate.

Belongs to the ThiI family.

It is found in the cytoplasm. The catalysed reaction is [ThiI sulfur-carrier protein]-S-sulfanyl-L-cysteine + a uridine in tRNA + 2 reduced [2Fe-2S]-[ferredoxin] + ATP + H(+) = [ThiI sulfur-carrier protein]-L-cysteine + a 4-thiouridine in tRNA + 2 oxidized [2Fe-2S]-[ferredoxin] + AMP + diphosphate. It carries out the reaction [ThiS sulfur-carrier protein]-C-terminal Gly-Gly-AMP + S-sulfanyl-L-cysteinyl-[cysteine desulfurase] + AH2 = [ThiS sulfur-carrier protein]-C-terminal-Gly-aminoethanethioate + L-cysteinyl-[cysteine desulfurase] + A + AMP + 2 H(+). The protein operates within cofactor biosynthesis; thiamine diphosphate biosynthesis. In terms of biological role, catalyzes the ATP-dependent transfer of a sulfur to tRNA to produce 4-thiouridine in position 8 of tRNAs, which functions as a near-UV photosensor. Also catalyzes the transfer of sulfur to the sulfur carrier protein ThiS, forming ThiS-thiocarboxylate. This is a step in the synthesis of thiazole, in the thiamine biosynthesis pathway. The sulfur is donated as persulfide by IscS. The sequence is that of tRNA sulfurtransferase from Aliivibrio fischeri (strain ATCC 700601 / ES114) (Vibrio fischeri).